The chain runs to 427 residues: MPSIEAVGAREILDSRGNPTVEVEVVLEDGTLGRAAVPSGASTGAFEAVELRDGEDRYGGKGVRKAVAAVIERIGPAIIELEATEQRLLDQTLIDLDGTPGKSALGANALLGVSLAVAKAAAAASGLPLFRYLGGPSAHLLPVPMLNILNGGAHADTNVDIQEFMIAPIGASSFSESLRWGAEVYHALKSVLKARGLGTGVGDEGGFAPSLPTNRDALDLIAEAVDKVGLRLGSDVALALDVASTEFYADGSYTFEGSTRTAEELSDYYAELVGAYPIVSIEDPLAEDDWSGWVALTERLGTKVQLVGDDLFVTNPERLARGIASKAANALLVKVNQIGTLTETLDAVNLAHRNGYRAMMSHRSGETEDTTIADLAVAVDCGQIKTGAPARSERVAKYNQLLRIEEELDDAARFAGAAAFPRHGQPA.

Residue Q162 participates in (2R)-2-phosphoglycerate binding. The active-site Proton donor is E204. Mg(2+) contacts are provided by D241, E282, and D309. The (2R)-2-phosphoglycerate site is built by K334, R363, S364, and K385. The active-site Proton acceptor is the K334.

It belongs to the enolase family. The cofactor is Mg(2+).

The protein resides in the cytoplasm. It localises to the secreted. It is found in the cell surface. It carries out the reaction (2R)-2-phosphoglycerate = phosphoenolpyruvate + H2O. It functions in the pathway carbohydrate degradation; glycolysis; pyruvate from D-glyceraldehyde 3-phosphate: step 4/5. Functionally, catalyzes the reversible conversion of 2-phosphoglycerate (2-PG) into phosphoenolpyruvate (PEP). It is essential for the degradation of carbohydrates via glycolysis. The protein is Enolase of Frankia alni (strain DSM 45986 / CECT 9034 / ACN14a).